Consider the following 524-residue polypeptide: Thioredoxin reductase 2, mitochondrial (524 aa).

Residues 1–34 constitute a mitochondrion transit peptide; it reads MVAAMVAALRGPSRRFRPRTRALTRGTRGAASAA. Residue 41–70 participates in FAD binding; it reads DLLVIGGGSGGLACAKEAAQLGKKVAVADY. At Lys79 the chain carries N6-succinyllysine. Cys86 and Cys91 are disulfide-bonded. An N6-succinyllysine mark is found at Lys175 and Lys329. The active-site Proton acceptor is His497. The cysteinyl-selenocysteine (Cys-Sec) cross-link spans 522–523; it reads CU. Sec523 is a non-standard amino acid (selenocysteine).

Belongs to the class-I pyridine nucleotide-disulfide oxidoreductase family. As to quaternary structure, homodimer. FAD serves as cofactor. Expressed in liver, heart, testis and kidney.

It localises to the mitochondrion. It catalyses the reaction [thioredoxin]-dithiol + NADP(+) = [thioredoxin]-disulfide + NADPH + H(+). In terms of biological role, involved in the control of reactive oxygen species levels and the regulation of mitochondrial redox homeostasis. Maintains thioredoxin in a reduced state. May play a role in redox-regulated cell signaling. The chain is Thioredoxin reductase 2, mitochondrial from Mus musculus (Mouse).